A 364-amino-acid chain; its full sequence is Succinate--CoA ligase [ADP-forming] subunit beta (364 aa).

The region spanning 9 to 229 (KNIFKKYGIP…EFEEYKNKEK (221 aa)) is the ATP-grasp domain. Residues K43, 50–52 (GRG), E89, L92, and E97 each bind ATP. Residues N189 and D203 each coordinate Mg(2+). Residues N246 and 303–305 (GIT) each bind substrate.

This sequence belongs to the succinate/malate CoA ligase beta subunit family. In terms of assembly, heterotetramer of two alpha and two beta subunits. The cofactor is Mg(2+).

The catalysed reaction is succinate + ATP + CoA = succinyl-CoA + ADP + phosphate. It catalyses the reaction GTP + succinate + CoA = succinyl-CoA + GDP + phosphate. It functions in the pathway carbohydrate metabolism; tricarboxylic acid cycle; succinate from succinyl-CoA (ligase route): step 1/1. In terms of biological role, succinyl-CoA synthetase functions in the citric acid cycle (TCA), coupling the hydrolysis of succinyl-CoA to the synthesis of either ATP or GTP and thus represents the only step of substrate-level phosphorylation in the TCA. The beta subunit provides nucleotide specificity of the enzyme and binds the substrate succinate, while the binding sites for coenzyme A and phosphate are found in the alpha subunit. The chain is Succinate--CoA ligase [ADP-forming] subunit beta from Methanocaldococcus jannaschii (strain ATCC 43067 / DSM 2661 / JAL-1 / JCM 10045 / NBRC 100440) (Methanococcus jannaschii).